The following is a 509-amino-acid chain: Lysine--tRNA ligase (509 aa).

Glutamate 418 and glutamate 425 together coordinate Mg(2+).

It belongs to the class-II aminoacyl-tRNA synthetase family. As to quaternary structure, homodimer. The cofactor is Mg(2+).

The protein resides in the cytoplasm. It carries out the reaction tRNA(Lys) + L-lysine + ATP = L-lysyl-tRNA(Lys) + AMP + diphosphate. The polypeptide is Lysine--tRNA ligase (lysS) (Acinetobacter baylyi (strain ATCC 33305 / BD413 / ADP1)).